The following is a 366-amino-acid chain: Flagellar P-ring protein (366 aa).

An N-terminal signal peptide occupies residues Met1 to Ala19.

It belongs to the FlgI family. As to quaternary structure, the basal body constitutes a major portion of the flagellar organelle and consists of four rings (L,P,S, and M) mounted on a central rod.

Its subcellular location is the periplasm. The protein localises to the bacterial flagellum basal body. Assembles around the rod to form the L-ring and probably protects the motor/basal body from shearing forces during rotation. This Ruegeria pomeroyi (strain ATCC 700808 / DSM 15171 / DSS-3) (Silicibacter pomeroyi) protein is Flagellar P-ring protein.